Consider the following 264-residue polypeptide: MSGQDLVTLNVGGRIFTTRPSTLKQFPASRLAGMLDGRDQEFKTVDGQIFVDRDGALFSFILDFLRNHELLLPSDFADHHRLQREALFYELDSLVDLLSQFLLQSRSAVMEVHFLNQNTQAFFRVFGSCSKTIEMLSGRITMFVERPTALTGNRNSPLALPPQRPSHHDLLFHCGSDGAAENQAGVRYISIKPDNRKLANGTNVLGLLVDTLLKEGFHLVSTRTPASGEKSECYVFERITTPQVLGMSKTPKSETTTMPAPSQK.

Positions 5 to 74 constitute a BTB domain; sequence DLVTLNVGGR…LRNHELLLPS (70 aa).

Can form homooligomers. Interacts with KCNA1 (via cytoplasmic N-terminal domain) and KCNA4.

It is found in the endoplasmic reticulum. Inhibits potassium fluxes in cells. May regulate Kv1 family channel proteins by retaining a fraction of channels in endomembranes. This Mus musculus (Mouse) protein is Potassium channel regulatory protein (Kcnrg).